We begin with the raw amino-acid sequence, 382 residues long: Na(+)/H(+) antiporter NhaA 2 (382 aa).

Helical transmembrane passes span 7-27 (MVLS…LALL), 58-78 (LDLW…GLEL), 94-114 (SLPI…FAAI), 124-144 (GWAI…MLLG), 153-173 (LFLL…IALF), 178-198 (LSAL…LLNY), 199-219 (YHIT…IAML), 255-275 (NPWV…GIDI), 291-311 (IILG…FIAI), 327-347 (FYGI…IDGL), and 361-381 (LAIL…LKIV).

The protein belongs to the NhaA Na(+)/H(+) (TC 2.A.33) antiporter family.

The protein localises to the cell inner membrane. It catalyses the reaction Na(+)(in) + 2 H(+)(out) = Na(+)(out) + 2 H(+)(in). Functionally, na(+)/H(+) antiporter that extrudes sodium in exchange for external protons. This is Na(+)/H(+) antiporter NhaA 2 from Campylobacter jejuni subsp. jejuni serotype O:6 (strain 81116 / NCTC 11828).